The following is a 244-amino-acid chain: ATP synthase subunit 4, mitochondrial (244 aa).

Residues 1–36 (MSSKLFCLRSFPSVQRTAWQRLVLPSTRKFSLTPTT) constitute a mitochondrion transit peptide.

Belongs to the eukaryotic ATPase B chain family. F-type ATPases have 2 components, CF(1) - the catalytic core - and CF(0) - the membrane proton channel. In yeast, the dimeric form of ATP synthase consists of 17 polypeptides: alpha, beta, gamma, delta, epsilon, 4 (B), 5 (OSCP), 6 (A), 8, 9 (C), d, E (Tim11), f, g, h, i/j and k.

The protein localises to the mitochondrion. The protein resides in the mitochondrion inner membrane. Functionally, mitochondrial membrane ATP synthase (F(1)F(0) ATP synthase or Complex V) produces ATP from ADP in the presence of a proton gradient across the membrane which is generated by electron transport complexes of the respiratory chain. F-type ATPases consist of two structural domains, F(1) - containing the extramembraneous catalytic core, and F(0) - containing the membrane proton channel, linked together by a central stalk and a peripheral stalk. During catalysis, ATP synthesis in the catalytic domain of F(1) is coupled via a rotary mechanism of the central stalk subunits to proton translocation. Part of the complex F(0) domain and the peripheric stalk, which acts as a stator to hold the catalytic alpha(3)beta(3) subcomplex and subunit a/ATP6 static relative to the rotary elements. This is ATP synthase subunit 4, mitochondrial (atp4) from Schizosaccharomyces pombe (strain 972 / ATCC 24843) (Fission yeast).